The following is a 1098-amino-acid chain: Mediator of RNA polymerase II transcription subunit 5 (1098 aa).

The interval 1019-1041 (PDDVQKSADMKPDTGIKEDDSEK) is disordered. Over residues 1021-1041 (DVQKSADMKPDTGIKEDDSEK) the composition is skewed to basic and acidic residues.

The protein belongs to the Mediator complex subunit 5 family. As to quaternary structure, component of the Mediator complex.

It is found in the nucleus. In terms of biological role, component of the Mediator complex, a coactivator involved in the regulated transcription of nearly all RNA polymerase II-dependent genes. Mediator functions as a bridge to convey information from gene-specific regulatory proteins to the basal RNA polymerase II transcription machinery. Mediator is recruited to promoters by direct interactions with regulatory proteins and serves as a scaffold for the assembly of a functional preinitiation complex with RNA polymerase II and the general transcription factors. The protein is Mediator of RNA polymerase II transcription subunit 5 (NUT1) of Eremothecium gossypii (strain ATCC 10895 / CBS 109.51 / FGSC 9923 / NRRL Y-1056) (Yeast).